A 271-amino-acid polypeptide reads, in one-letter code: Magnetosome protein MamX (271 aa).

The Cytoplasmic segment spans residues Met1–Asn10. The chain crosses the membrane as a helical span at residues Ile11–Val31. The Lumenal portion of the chain corresponds to Phe32 to Arg271. The MCR (magnetochrome) 1 motif lies at Ile48–Val71. Heme-binding residues include Cys65, Cys68, His69, Cys104, Cys107, and His108. Residues Ile87–Ile110 carry the MCR 2 motif.

This sequence belongs to the magnetosome MamX family. Heme is required as a cofactor.

Its subcellular location is the magnetosome membrane. In terms of biological role, required for correct biomineralization of the magnetosome, may be involved in redox control of biomineralization. May function with MamY, MamZ amd Mms6. In Paramagnetospirillum magneticum (strain ATCC 700264 / AMB-1) (Magnetospirillum magneticum), this protein is Magnetosome protein MamX (mamX).